The primary structure comprises 279 residues: Putative pyruvate, phosphate dikinase regulatory protein (279 aa).

154 to 161 (GVSRTSKT) contributes to the ADP binding site.

The protein belongs to the pyruvate, phosphate/water dikinase regulatory protein family. PDRP subfamily.

It carries out the reaction N(tele)-phospho-L-histidyl/L-threonyl-[pyruvate, phosphate dikinase] + ADP = N(tele)-phospho-L-histidyl/O-phospho-L-threonyl-[pyruvate, phosphate dikinase] + AMP + H(+). It catalyses the reaction N(tele)-phospho-L-histidyl/O-phospho-L-threonyl-[pyruvate, phosphate dikinase] + phosphate + H(+) = N(tele)-phospho-L-histidyl/L-threonyl-[pyruvate, phosphate dikinase] + diphosphate. Its function is as follows. Bifunctional serine/threonine kinase and phosphorylase involved in the regulation of the pyruvate, phosphate dikinase (PPDK) by catalyzing its phosphorylation/dephosphorylation. The protein is Putative pyruvate, phosphate dikinase regulatory protein of Rhodopseudomonas palustris (strain BisB18).